Consider the following 218-residue polypeptide: Peptide methionine sulfoxide reductase A2 (218 aa).

Residues 1-19 (MDSSLKTQEPQVVETSPSP) are compositionally biased toward polar residues. Residues 1-30 (MDSSLKTQEPQVVETSPSPVAQEPPQVADK) are disordered. S205 is modified (phosphoserine).

Belongs to the MsrA Met sulfoxide reductase family.

It localises to the cytoplasm. The protein localises to the cytosol. The enzyme catalyses L-methionyl-[protein] + [thioredoxin]-disulfide + H2O = L-methionyl-(S)-S-oxide-[protein] + [thioredoxin]-dithiol. It catalyses the reaction [thioredoxin]-disulfide + L-methionine + H2O = L-methionine (S)-S-oxide + [thioredoxin]-dithiol. Its activity is regulated as follows. Activated during dark in short day conditions. Catalyzes the reduction of methionine sulfoxide (MetSO) to methionine in proteins. Plays a protective role against oxidative stress by restoring activity to proteins that have been inactivated by methionine oxidation. Prevents cellular oxidative damage in long nights. MSRA family specifically reduces the MetSO S-enantiomer. The protein is Peptide methionine sulfoxide reductase A2 (MRSA2) of Arabidopsis thaliana (Mouse-ear cress).